Here is a 154-residue protein sequence, read N- to C-terminus: Protein X (154 aa).

Positions 68–117 (PCALRFTSARRMETTVNAPWSLPTVLHKRTIGLSGRSMTWIEEYIKDCVF) are mitochondrial targeting sequence.

The protein belongs to the orthohepadnavirus protein X family. In terms of assembly, may form homodimer. May interact with host CEBPA, CFLAR, CREB1, DDB1, E4F1, HBXIP, HSPD1/HSP60, NFKBIA, POLR2E and SMAD4. Interacts with host SMC5-SMC6 complex and induces its degradation. Interacts with host TRPC4AP; leading to prevent ubiquitination of TRPC4AP. Interacts with host PLSCR1; this interaction promotes ubiquitination and degradation of HBx and impairs HBx-mediated cell proliferation. Post-translationally, a fraction may be phosphorylated in insect cells and HepG2 cells, a human hepatoblastoma cell line. Phosphorylated in vitro by host protein kinase C or mitogen-activated protein kinase. N-acetylated in insect cells.

The protein localises to the host cytoplasm. Its subcellular location is the host nucleus. It is found in the host mitochondrion. In terms of biological role, multifunctional protein that plays a role in silencing host antiviral defenses and promoting viral transcription. Does not seem to be essential for HBV infection. May be directly involved in development of cirrhosis and liver cancer (hepatocellular carcinoma). Most of cytosolic activities involve modulation of cytosolic calcium. The effect on apoptosis is controversial depending on the cell types in which the studies have been conducted. May induce apoptosis by localizing in mitochondria and causing loss of mitochondrial membrane potential. May also modulate apoptosis by binding host CFLAR, a key regulator of the death-inducing signaling complex (DISC). Promotes viral transcription by using the host E3 ubiquitin ligase DDB1 to target the SMC5-SMC6 complex to proteasomal degradation. This host complex would otherwise bind to viral episomal DNA, and prevents its transcription. Moderately stimulates transcription of many different viral and cellular transcription elements. Promoters and enhancers stimulated by HBx contain DNA binding sites for NF-kappa-B, AP-1, AP-2, c-EBP, ATF/CREB, or the calcium-activated factor NF-AT. This chain is Protein X, found in Homo sapiens (Human).